The sequence spans 435 residues: MLDIKVIRENLDWSKKKLATRGIKPEELDELVEIDTKRRKDLTMSEQLKAKRNDVSKQIAEKKRNKEDASDAIAEMREVGKEIKKLDKEVDELTEKQNYILLRLPNFPADSDPIGPDDSYNEEVRKWEEPTKFDFKPKAHWDLGTDLGILDWDRASKVSGARFVYYIGAGALLERAVFNFFLDENTKDGYTEIIPPYLVNDASMQGTGQFPKFHEDVYTIVDNDDPDKPRDLTLIPTAEVPLVNYFRNEIIHENKLPINVTAMSPAFRSEAGSAGRDTRGLIRMHEFRKVEMVKICKPDESWDELEKLTHNAEHLLQKLGLPYHVVALSTGDASFTSAKTYDLEVWMPAQDKYREISSCSNCTDFQARRAQIRYRDEDGKLHLAHTLNGSGLAVGRCVAAILENYQNEDGSVTVPDVLVPYMNGMKKITKESGLI.

237-239 (TAE) contacts L-serine. 268–270 (RSE) is a binding site for ATP. Glu-291 contributes to the L-serine binding site. 355–358 (EISS) is a binding site for ATP. Residue Ser-390 participates in L-serine binding.

It belongs to the class-II aminoacyl-tRNA synthetase family. Type-1 seryl-tRNA synthetase subfamily. As to quaternary structure, homodimer. The tRNA molecule binds across the dimer.

It localises to the cytoplasm. It carries out the reaction tRNA(Ser) + L-serine + ATP = L-seryl-tRNA(Ser) + AMP + diphosphate + H(+). The catalysed reaction is tRNA(Sec) + L-serine + ATP = L-seryl-tRNA(Sec) + AMP + diphosphate + H(+). Its pathway is aminoacyl-tRNA biosynthesis; selenocysteinyl-tRNA(Sec) biosynthesis; L-seryl-tRNA(Sec) from L-serine and tRNA(Sec): step 1/1. In terms of biological role, catalyzes the attachment of serine to tRNA(Ser). Is also able to aminoacylate tRNA(Sec) with serine, to form the misacylated tRNA L-seryl-tRNA(Sec), which will be further converted into selenocysteinyl-tRNA(Sec). The chain is Serine--tRNA ligase from Lactobacillus acidophilus (strain ATCC 700396 / NCK56 / N2 / NCFM).